Here is a 597-residue protein sequence, read N- to C-terminus: Translation initiation factor IF-2 (597 aa).

Composition is skewed to low complexity over residues 57–73 (GGDAAPAAASAPAAATA) and 81–95 (TPAAAAQADAEPASD). The disordered stretch occupies residues 57–96 (GGDAAPAAASAPAAATAEPEEADETPAAAAQADAEPASDL). The region spanning 98–271 (HRAPVVTIMG…ELEDLRADPK (174 aa)) is the tr-type G domain. Positions 107-114 (GHVDHGKT) are G1. 107-114 (GHVDHGKT) is a GTP binding site. The tract at residues 132–136 (GITQH) is G2. The tract at residues 153-156 (DTPG) is G3. GTP contacts are provided by residues 153-157 (DTPGH) and 207-210 (NKVD). Positions 207–210 (NKVD) are G4. Residues 243-245 (SAK) are G5.

This sequence belongs to the TRAFAC class translation factor GTPase superfamily. Classic translation factor GTPase family. IF-2 subfamily.

The protein localises to the cytoplasm. Functionally, one of the essential components for the initiation of protein synthesis. Protects formylmethionyl-tRNA from spontaneous hydrolysis and promotes its binding to the 30S ribosomal subunits. Also involved in the hydrolysis of GTP during the formation of the 70S ribosomal complex. The sequence is that of Translation initiation factor IF-2 from Deinococcus radiodurans (strain ATCC 13939 / DSM 20539 / JCM 16871 / CCUG 27074 / LMG 4051 / NBRC 15346 / NCIMB 9279 / VKM B-1422 / R1).